A 289-amino-acid chain; its full sequence is Bifunctional protein FolD (289 aa).

NADP(+)-binding positions include 166–168, Ser-191, and Ile-232; that span reads GRS.

It belongs to the tetrahydrofolate dehydrogenase/cyclohydrolase family. As to quaternary structure, homodimer.

It carries out the reaction (6R)-5,10-methylene-5,6,7,8-tetrahydrofolate + NADP(+) = (6R)-5,10-methenyltetrahydrofolate + NADPH. It catalyses the reaction (6R)-5,10-methenyltetrahydrofolate + H2O = (6R)-10-formyltetrahydrofolate + H(+). It participates in one-carbon metabolism; tetrahydrofolate interconversion. In terms of biological role, catalyzes the oxidation of 5,10-methylenetetrahydrofolate to 5,10-methenyltetrahydrofolate and then the hydrolysis of 5,10-methenyltetrahydrofolate to 10-formyltetrahydrofolate. This Synechococcus elongatus (strain ATCC 33912 / PCC 7942 / FACHB-805) (Anacystis nidulans R2) protein is Bifunctional protein FolD.